We begin with the raw amino-acid sequence, 435 residues long: GTPase Obg (435 aa).

The Obg domain maps to 6–164 (ADFVDRVKIF…RWLELELKIL (159 aa)). Residues 165–335 (ADVGLVGYPN…LVSKLASIVR (171 aa)) enclose the OBG-type G domain. Residues 171 to 178 (GYPNVGKS), 196 to 200 (FTTLI), 217 to 220 (DIPG), 287 to 290 (NKID), and 316 to 318 (SAV) each bind GTP. The Mg(2+) site is built by Ser178 and Thr198. One can recognise an OCT domain in the interval 357 to 435 (RRLPEKFHLE…IGDFEFEYRE (79 aa)).

This sequence belongs to the TRAFAC class OBG-HflX-like GTPase superfamily. OBG GTPase family. As to quaternary structure, monomer. Mg(2+) serves as cofactor.

It is found in the cytoplasm. An essential GTPase which binds GTP, GDP and possibly (p)ppGpp with moderate affinity, with high nucleotide exchange rates and a fairly low GTP hydrolysis rate. Plays a role in control of the cell cycle, stress response, ribosome biogenesis and in those bacteria that undergo differentiation, in morphogenesis control. This Thermotoga maritima (strain ATCC 43589 / DSM 3109 / JCM 10099 / NBRC 100826 / MSB8) protein is GTPase Obg.